A 130-amino-acid chain; its full sequence is Large ribosomal subunit protein bL12 (130 aa).

It belongs to the bacterial ribosomal protein bL12 family. As to quaternary structure, homodimer. Part of the ribosomal stalk of the 50S ribosomal subunit. Forms a multimeric L10(L12)X complex, where L10 forms an elongated spine to which 2 to 4 L12 dimers bind in a sequential fashion. Binds GTP-bound translation factors.

Forms part of the ribosomal stalk which helps the ribosome interact with GTP-bound translation factors. Is thus essential for accurate translation. This chain is Large ribosomal subunit protein bL12, found in Prochlorococcus marinus (strain SARG / CCMP1375 / SS120).